We begin with the raw amino-acid sequence, 119 residues long: Acidic phospholipase A2 CM-II (119 aa).

7 disulfides stabilise this stretch: Cys-11–Cys-71, Cys-26–Cys-118, Cys-28–Cys-44, Cys-43–Cys-99, Cys-50–Cys-92, Cys-60–Cys-85, and Cys-78–Cys-90. Residues Phe-27, Gly-29, and Gly-31 each contribute to the Ca(2+) site. His-47 is a catalytic residue. Asp-48 contributes to the Ca(2+) binding site. The active site involves Asp-93.

This sequence belongs to the phospholipase A2 family. Group I subfamily. D49 sub-subfamily. The cofactor is Ca(2+). As to expression, expressed by the venom gland.

Its subcellular location is the secreted. It carries out the reaction a 1,2-diacyl-sn-glycero-3-phosphocholine + H2O = a 1-acyl-sn-glycero-3-phosphocholine + a fatty acid + H(+). Functionally, PLA2 catalyzes the calcium-dependent hydrolysis of the 2-acyl groups in 3-sn-phosphoglycerides. The polypeptide is Acidic phospholipase A2 CM-II (Aspidelaps scutatus (Shield-nose snake)).